Here is a 154-residue protein sequence, read N- to C-terminus: Ribonuclease H (154 aa).

Residues 5–146 enclose the RNase H type-1 domain; that stretch reads EQNIVYLYCD…ADELANRGID (142 aa). Residues D14, E52, D74, and D138 each coordinate Mg(2+).

The protein belongs to the RNase H family. As to quaternary structure, monomer. It depends on Mg(2+) as a cofactor.

It localises to the cytoplasm. The enzyme catalyses Endonucleolytic cleavage to 5'-phosphomonoester.. In terms of biological role, endonuclease that specifically degrades the RNA of RNA-DNA hybrids. This Coxiella burnetii (strain RSA 331 / Henzerling II) protein is Ribonuclease H.